The primary structure comprises 142 residues: Large ribosomal subunit protein uL13 (142 aa).

Belongs to the universal ribosomal protein uL13 family. As to quaternary structure, part of the 50S ribosomal subunit.

Its function is as follows. This protein is one of the early assembly proteins of the 50S ribosomal subunit, although it is not seen to bind rRNA by itself. It is important during the early stages of 50S assembly. In Alkalilimnicola ehrlichii (strain ATCC BAA-1101 / DSM 17681 / MLHE-1), this protein is Large ribosomal subunit protein uL13.